The chain runs to 428 residues: Beta-1,3-galactosyl-O-glycosyl-glycoprotein beta-1,6-N-acetylglucosaminyltransferase (428 aa).

Over 1-9 (MLRNLFRRR) the chain is Cytoplasmic. Residues 5–9 (LFRRR) are mediates interaction with GOLPH3 and is necessary and sufficient for localization to the Golgi. A helical; Signal-anchor for type II membrane protein membrane pass occupies residues 10-32 (LFSCPTKYYFMLLVLSLITFSVL). The segment at 33–121 (RIHQKPEFFS…EPLTKEEVGF (89 aa)) is stem region. Residues 33-428 (RIHQKPEFFS…RHKALENLEH (396 aa)) lie on the Lumenal side of the membrane. Asparagine 58 and asparagine 95 each carry an N-linked (GlcNAc...) asparagine glycan. Cystine bridges form between cysteine 59/cysteine 413, cysteine 100/cysteine 172, cysteine 151/cysteine 199, and cysteine 372/cysteine 381. The catalytic stretch occupies residues 122–428 (PIAYSIVVHH…RHKALENLEH (307 aa)). UDP-N-acetyl-alpha-D-glucosamine is bound by residues 128 to 130 (VVH), 155 to 157 (DRK), and tyrosine 187. A glycoprotein is bound by residues glutamate 243, asparagine 250, lysine 251, arginine 254, glutamate 320, lysine 341, and tyrosine 358. Residue glutamate 320 is the Nucleophile of the active site. UDP-N-acetyl-alpha-D-glucosamine is bound by residues arginine 378 and lysine 401.

The protein belongs to the glycosyltransferase 14 family. Interacts with GOLPH3; may control GCNT1 retention in the Golgi. In terms of processing, N-glycosylated. Expressed in kidney, liver, stomach, spleen, lung and brain.

Its subcellular location is the golgi apparatus membrane. The enzyme catalyses a 3-O-[beta-D-galactosyl-(1-&gt;3)-N-acetyl-alpha-D-galactosaminyl]-L-seryl-[protein] + UDP-N-acetyl-alpha-D-glucosamine = 3-O-{beta-D-galactosyl-(1-&gt;3)-[N-acetyl-beta-D-glucosaminyl-(1-&gt;6)]-N-acetyl-alpha-D-galactosaminyl}-L-seryl-[protein] + UDP + H(+). It catalyses the reaction a 3-O-[beta-D-galactosyl-(1-&gt;3)-N-acetyl-alpha-D-galactosaminyl]-L-threonyl-[protein] + UDP-N-acetyl-alpha-D-glucosamine = a 3-O-{beta-D-galactosyl-(1-&gt;3)-[N-acetyl-beta-D-glucosaminyl-(1-&gt;6)]-N-acetyl-alpha-D-galactosaminyl}-L-threonyl-[protein] + UDP + H(+). It carries out the reaction a globoside GalGb4Cer + UDP-N-acetyl-alpha-D-glucosamine = a globoside GlcNAc-(beta1-&gt;6)-GalGb4Cer + UDP + H(+). The catalysed reaction is a ganglioside GA1 + UDP-N-acetyl-alpha-D-glucosamine = a ganglioside beta-D-GlcNAc-(1-&gt;6)-GA1 + UDP + H(+). It functions in the pathway protein modification; protein glycosylation. Its pathway is glycolipid biosynthesis. With respect to regulation, inactivated by thiol-reactive agents. Inhibited by free UDP. Glycosyltransferase that catalyzes the transfer of an N-acetylglucosamine (GlcNAc) moiety in beta1-6 linkage from UDP-GlcNAc onto mucin-type core 1 O-glycan to form the branched mucin-type core 2 O-glycan. The catalysis is metal ion-independent and occurs with inversion of the anomeric configuration of sugar donor. Selectively involved in synthesis of mucin-type core 2 O-glycans that serve as scaffolds for the display of selectin ligand sialyl Lewis X epitope by myeloid cells, with an impact on homeostasis and recruitment to inflammatory sites. Can also act on glycolipid substrates. Transfers GlcNAc moiety to GalGb4Cer globosides in a reaction step to the synthesis of stage-specific embryonic antigen 1 (SSEA-1) determinant. Can use Galbeta1-3GalNAcalpha1-R and Galbeta1-3GalNAcbeta1-R oligosaccharide derivatives as acceptor substrates. The sequence is that of Beta-1,3-galactosyl-O-glycosyl-glycoprotein beta-1,6-N-acetylglucosaminyltransferase (Gcnt1) from Mus musculus (Mouse).